The chain runs to 156 residues: Ribosomal RNA large subunit methyltransferase H (156 aa).

Residues Leu-73, Gly-104, and 123–128 contribute to the S-adenosyl-L-methionine site; that span reads LSALTL.

It belongs to the RNA methyltransferase RlmH family. In terms of assembly, homodimer.

It is found in the cytoplasm. It carries out the reaction pseudouridine(1915) in 23S rRNA + S-adenosyl-L-methionine = N(3)-methylpseudouridine(1915) in 23S rRNA + S-adenosyl-L-homocysteine + H(+). Specifically methylates the pseudouridine at position 1915 (m3Psi1915) in 23S rRNA. The chain is Ribosomal RNA large subunit methyltransferase H from Shewanella sp. (strain ANA-3).